Here is a 35-residue protein sequence, read N- to C-terminus: Thaumatin-like protein 6 (35 aa).

This sequence belongs to the thaumatin family.

The protein is Thaumatin-like protein 6 of Glebionis coronaria (Crown daisy).